Reading from the N-terminus, the 215-residue chain is Small ribosomal subunit protein uS5 (215 aa).

Residues methionine 1–glycine 12 show a composition bias toward gly residues. The disordered stretch occupies residues methionine 1–glutamine 31. A compositionally biased stretch (basic and acidic residues) spans glycine 13–glutamine 31. One can recognise an S5 DRBM domain in the interval tyrosine 34 to valine 97.

This sequence belongs to the universal ribosomal protein uS5 family. As to quaternary structure, part of the 30S ribosomal subunit. Contacts proteins S4 and S8.

With S4 and S12 plays an important role in translational accuracy. Functionally, located at the back of the 30S subunit body where it stabilizes the conformation of the head with respect to the body. This Cutibacterium acnes (strain DSM 16379 / KPA171202) (Propionibacterium acnes) protein is Small ribosomal subunit protein uS5.